The chain runs to 524 residues: MGGRSSCEDPGCPRSEGRAPRMGCVKSRFLRDGSKASKTEPSANQKGPVYVPDPTSSSKLGPNNSNSMPPGFVEGSEDTIVVALYDYEAIHREDLSFQKGDQMVVLEEAGEWWKARSLATKKEGYIPSNYVARVNSLETEEWFFKGISRKDAERHLLAPGNMLGSFMIRDSETTKGSYSLSVRDFDPQHGDTVKHYKIRTLDSGGFYISPRSTFSSLQELVLHYKKGKDGLCQKLSVPCVSPKPQKPWEKDAWEIPRESLQMEKKLGAGQFGEVWMATYNKHTKVAVKTMKPGSMSVEAFLAEANLMKSLQHDKLVKLHAVVSQEPIFIVTEFMAKGSLLDFLKSEEGSKQPLPKLIDFSAQISEGMAFIEQRNYIHRDLRAANILVSASLVCKIADFGLARIIEDNEYTAREGAKFPIKWTAPEAINFGSFTIKSDVWSFGILLMEIVTYGRIPYPGMSNPEVIRALEHGYRMPRPDNCPEELYNIMIRCWKNRPEERPTFEYIQSVLDDFYTATESQYQQQP.

Positions 1–72 (MGGRSSCEDP…NNSNSMPPGF (72 aa)) are disordered. Gly-2 carries N-myristoyl glycine lipidation. Gly-3 is lipidated: S-palmitoyl cysteine. Residues 29–38 (FLRDGSKASK) show a composition bias toward basic and acidic residues. A Phosphotyrosine; by autocatalysis modification is found at Tyr-50. Positions 54-68 (PTSSSKLGPNNSNSM) are enriched in polar residues. An SH3 domain is found at 76–136 (SEDTIVVALY…PSNYVARVNS (61 aa)). An SH2 domain is found at 142–239 (WFFKGISRKD…GLCQKLSVPC (98 aa)). Residue Thr-200 is modified to Phosphothreonine. Tyr-207 carries the phosphotyrosine modification. A Protein kinase domain is found at 260–513 (LQMEKKLGAG…YIQSVLDDFY (254 aa)). Residues 266–274 (LGAGQFGEV) and Lys-288 each bind ATP. Catalysis depends on Asp-379, which acts as the Proton acceptor. Phosphotyrosine; by autocatalysis is present on Tyr-409. Ser-460 carries the post-translational modification Phosphoserine. Residue Tyr-520 is modified to Phosphotyrosine.

This sequence belongs to the protein kinase superfamily. Tyr protein kinase family. SRC subfamily. In terms of assembly, interacts with ADAM15. Interacts with FASLG. Interacts with ARRB1 and ARRB2. Interacts with FCGR1A; the interaction may be indirect. Interacts with IL6ST. Interacts (via SH3 domain) with ELMO1. Interacts (via SH3 domain) with TP73. Interacts with YAP1. Interacts with ABL1 and ITGB1, and thereby recruits ABL1 to activated ITGB1. Interacts (via SH2 domain) with FLT3 (tyrosine phosphorylated). Interacts with CBL. Interacts with VAV1, WAS and RAPGEF1. Interacts (via SH3 domain) with WDCP. Phosphorylated on several tyrosine residues. Autophosphorylated. Becomes rapidly phosphorylated upon activation of the immunoglobulin receptors FCGR1A and FCGR2A. Phosphorylation at Tyr-409 increases kinase activity. Phosphorylation at Tyr-520 inhibits kinase activity. Kinase activity is not required for phosphorylation at Tyr-520, suggesting that this site may be a target of other kinases. In terms of processing, ubiquitinated by CBL, leading to its degradation via the proteasome. Post-translationally, isoform 2 palmitoylation at position 2 requires prior myristoylation. Palmitoylation at position 3 is required for caveolar localization of isoform 2. In terms of tissue distribution, expressed predominantly in cells of the myeloid and B-lymphoid lineages.

It is found in the cytoplasmic vesicle. Its subcellular location is the secretory vesicle. The protein localises to the cytoplasm. The protein resides in the cytosol. It localises to the membrane. It is found in the caveola. Its subcellular location is the lysosome. The protein localises to the cell projection. The protein resides in the podosome membrane. It localises to the cell membrane. It is found in the cell junction. Its subcellular location is the focal adhesion. The protein localises to the cytoskeleton. The protein resides in the golgi apparatus. It localises to the nucleus. It catalyses the reaction L-tyrosyl-[protein] + ATP = O-phospho-L-tyrosyl-[protein] + ADP + H(+). Subject to autoinhibition, mediated by intramolecular interactions involving the SH2 and SH3 domains. Kinase activity is also regulated by phosphorylation at regulatory tyrosine residues. Phosphorylation at Tyr-409 is required for optimal activity. Phosphorylation at Tyr-520 inhibits kinase activity. Inhibited by PP1. Non-receptor tyrosine-protein kinase found in hematopoietic cells that transmits signals from cell surface receptors and plays an important role in the regulation of innate immune responses, including neutrophil, monocyte, macrophage and mast cell functions, phagocytosis, cell survival and proliferation, cell adhesion and migration. Acts downstream of receptors that bind the Fc region of immunoglobulins, such as FCGR1A and FCGR2A, but also CSF3R, PLAUR, the receptors for IFNG, IL2, IL6 and IL8, and integrins, such as ITGB1 and ITGB2. During the phagocytic process, mediates mobilization of secretory lysosomes, degranulation, and activation of NADPH oxidase to bring about the respiratory burst. Plays a role in the release of inflammatory molecules. Promotes reorganization of the actin cytoskeleton and actin polymerization, formation of podosomes and cell protrusions. Inhibits TP73-mediated transcription activation and TP73-mediated apoptosis. Phosphorylates CBL in response to activation of immunoglobulin gamma Fc region receptors. Phosphorylates ADAM15, BCR, ELMO1, FCGR2A, GAB1, GAB2, RAPGEF1, STAT5B, TP73, VAV1 and WAS. This is Tyrosine-protein kinase HCK (Hck) from Mus musculus (Mouse).